The chain runs to 93 residues: Small ribosomal subunit protein uS19 (93 aa).

The interval 73 to 93 (EFSPTRTYRGHDKKDKKIQKK) is disordered.

This sequence belongs to the universal ribosomal protein uS19 family.

Functionally, protein S19 forms a complex with S13 that binds strongly to the 16S ribosomal RNA. The polypeptide is Small ribosomal subunit protein uS19 (Phytoplasma mali (strain AT)).